Here is a 473-residue protein sequence, read N- to C-terminus: Cysteine--tRNA ligase (473 aa).

Cys-28 serves as a coordination point for Zn(2+). The 'HIGH' region motif lies at Val-30–His-40. Zn(2+)-binding residues include Cys-213, His-238, and Glu-242. The 'KMSKS' region motif lies at Lys-270 to Ser-274. Lys-273 lines the ATP pocket.

The protein belongs to the class-I aminoacyl-tRNA synthetase family. Monomer. Zn(2+) serves as cofactor.

The protein resides in the cytoplasm. The enzyme catalyses tRNA(Cys) + L-cysteine + ATP = L-cysteinyl-tRNA(Cys) + AMP + diphosphate. This is Cysteine--tRNA ligase from Blochmanniella pennsylvanica (strain BPEN).